The chain runs to 89 residues: C-C motif chemokine 18 (89 aa).

A signal peptide spans 1–20 (MKGLAAALLVLVCTMALCSC). 2 disulfides stabilise this stretch: cysteine 30/cysteine 54 and cysteine 31/cysteine 70.

This sequence belongs to the intercrine beta (chemokine CC) family. The Cys-30/Cys-54 disulfide bond is required for activity. In terms of tissue distribution, expressed at high levels in lung, lymph nodes, placenta, bone marrow, dendritic cells present in germinal centers and T-cell areas of secondary lymphoid organs and macrophages derived from peripheral blood monocytes. Not expressed by peripheral blood monocytes and a monocyte-to-macrophage differentiation is a prerequisite for expression. Expressed in synovial fluids from patients with rheumatoid and septic arthritis and in ovarian carcinoma ascitic fluid.

The protein localises to the secreted. Its function is as follows. Chemotactic factor that attracts lymphocytes but not monocytes or granulocytes. May be involved in B-cell migration into B-cell follicles in lymph nodes. Attracts naive T-lymphocytes toward dendritic cells and activated macrophages in lymph nodes, has chemotactic activity for naive T-cells, CD4+ and CD8+ T-cells and thus may play a role in both humoral and cell-mediated immunity responses. The chain is C-C motif chemokine 18 (CCL18) from Homo sapiens (Human).